Here is a 333-residue protein sequence, read N- to C-terminus: T-cell surface glycoprotein CD1c (333 aa).

An N-terminal signal peptide occupies residues 1-17 (MLFLQFLLLALLLPGGD). Residues 18–302 (NADASQEHVS…ILYWGHHFSM (285 aa)) lie on the Extracellular side of the membrane. N-linked (GlcNAc...) asparagine glycosylation is found at Asn-38, Asn-70, Asn-75, and Asn-146. 2 disulfides stabilise this stretch: Cys-120/Cys-185 and Cys-225/Cys-280. One can recognise an Ig-like domain in the interval 206–296 (PEAWLSSRPS…LGGQDIILYW (91 aa)). The helical transmembrane segment at 303-323 (NWIALVVIVPLVILIVLVLWF) threads the bilayer. Residues 324–333 (KKHCSYQDIL) are Cytoplasmic-facing. Residues 329-332 (YQDI) carry the Internalization signal motif.

Heterodimer with B2M (beta-2-microglobulin). In terms of tissue distribution, expressed on cortical thymocytes, on certain T-cell leukemias, and in various other tissues.

The protein resides in the cell membrane. The protein localises to the endosome membrane. Its subcellular location is the lysosome. Antigen-presenting protein that binds self and non-self lipid and glycolipid antigens and presents them to T-cell receptors on natural killer T-cells. The sequence is that of T-cell surface glycoprotein CD1c (CD1C) from Homo sapiens (Human).